The sequence spans 150 residues: Large ribosomal subunit protein bL9 (150 aa).

Belongs to the bacterial ribosomal protein bL9 family.

Binds to the 23S rRNA. In Shewanella sp. (strain MR-4), this protein is Large ribosomal subunit protein bL9.